Consider the following 312-residue polypeptide: Ribosomal RNA small subunit methyltransferase H (312 aa).

Residues 34–36 (AGH), D54, F81, D102, and Q109 each bind S-adenosyl-L-methionine.

This sequence belongs to the methyltransferase superfamily. RsmH family.

The protein localises to the cytoplasm. It catalyses the reaction cytidine(1402) in 16S rRNA + S-adenosyl-L-methionine = N(4)-methylcytidine(1402) in 16S rRNA + S-adenosyl-L-homocysteine + H(+). In terms of biological role, specifically methylates the N4 position of cytidine in position 1402 (C1402) of 16S rRNA. This Citrifermentans bemidjiense (strain ATCC BAA-1014 / DSM 16622 / JCM 12645 / Bem) (Geobacter bemidjiensis) protein is Ribosomal RNA small subunit methyltransferase H.